Consider the following 289-residue polypeptide: Ribosomal RNA small subunit methyltransferase A (289 aa).

Asn21, Leu23, Gly48, Glu69, Asp94, and Asn120 together coordinate S-adenosyl-L-methionine.

It belongs to the class I-like SAM-binding methyltransferase superfamily. rRNA adenine N(6)-methyltransferase family. RsmA subfamily.

Its subcellular location is the cytoplasm. The enzyme catalyses adenosine(1518)/adenosine(1519) in 16S rRNA + 4 S-adenosyl-L-methionine = N(6)-dimethyladenosine(1518)/N(6)-dimethyladenosine(1519) in 16S rRNA + 4 S-adenosyl-L-homocysteine + 4 H(+). Specifically dimethylates two adjacent adenosines (A1518 and A1519) in the loop of a conserved hairpin near the 3'-end of 16S rRNA in the 30S particle. May play a critical role in biogenesis of 30S subunits. The protein is Ribosomal RNA small subunit methyltransferase A of Actinobacillus pleuropneumoniae serotype 3 (strain JL03).